The primary structure comprises 188 residues: Elongation factor P-like protein (188 aa).

The protein belongs to the elongation factor P family.

The chain is Elongation factor P-like protein from Marinobacter nauticus (strain ATCC 700491 / DSM 11845 / VT8) (Marinobacter aquaeolei).